The primary structure comprises 181 residues: Crossover junction endodeoxyribonuclease RuvC (181 aa).

Active-site residues include aspartate 7, glutamate 67, and aspartate 139. Mg(2+) contacts are provided by aspartate 7, glutamate 67, and aspartate 139.

This sequence belongs to the RuvC family. Homodimer which binds Holliday junction (HJ) DNA. The HJ becomes 2-fold symmetrical on binding to RuvC with unstacked arms; it has a different conformation from HJ DNA in complex with RuvA. In the full resolvosome a probable DNA-RuvA(4)-RuvB(12)-RuvC(2) complex forms which resolves the HJ. Mg(2+) serves as cofactor.

Its subcellular location is the cytoplasm. It catalyses the reaction Endonucleolytic cleavage at a junction such as a reciprocal single-stranded crossover between two homologous DNA duplexes (Holliday junction).. In terms of biological role, the RuvA-RuvB-RuvC complex processes Holliday junction (HJ) DNA during genetic recombination and DNA repair. Endonuclease that resolves HJ intermediates. Cleaves cruciform DNA by making single-stranded nicks across the HJ at symmetrical positions within the homologous arms, yielding a 5'-phosphate and a 3'-hydroxyl group; requires a central core of homology in the junction. The consensus cleavage sequence is 5'-(A/T)TT(C/G)-3'. Cleavage occurs on the 3'-side of the TT dinucleotide at the point of strand exchange. HJ branch migration catalyzed by RuvA-RuvB allows RuvC to scan DNA until it finds its consensus sequence, where it cleaves and resolves the cruciform DNA. The polypeptide is Crossover junction endodeoxyribonuclease RuvC (Cupriavidus taiwanensis (strain DSM 17343 / BCRC 17206 / CCUG 44338 / CIP 107171 / LMG 19424 / R1) (Ralstonia taiwanensis (strain LMG 19424))).